A 319-amino-acid chain; its full sequence is N-acetylneuraminate lyase (319 aa).

Aceneuramate contacts are provided by Thr-51 and Thr-52. Catalysis depends on Tyr-143, which acts as the Proton donor. Lys-173 serves as the catalytic Schiff-base intermediate with substrate. The aceneuramate site is built by Ser-175, Gly-199, Asp-201, Glu-202, and Ser-218.

Belongs to the DapA family. NanA subfamily. As to quaternary structure, homotetramer.

It is found in the cytoplasm. It catalyses the reaction aceneuramate = aldehydo-N-acetyl-D-mannosamine + pyruvate. Its pathway is amino-sugar metabolism; N-acetylneuraminate degradation. Its function is as follows. Catalyzes the cleavage of N-acetylneuraminic acid (sialic acid) to form pyruvate and N-acetylmannosamine via a Schiff base intermediate. It prevents sialic acids from being recycled and returning to the cell surface. Involved in the N-glycolylneuraminic acid (Neu5Gc) degradation pathway. This chain is N-acetylneuraminate lyase, found in Sus scrofa (Pig).